We begin with the raw amino-acid sequence, 105 residues long: Small ribosomal subunit protein uS10 (105 aa).

Belongs to the universal ribosomal protein uS10 family. As to quaternary structure, part of the 30S ribosomal subunit.

In terms of biological role, involved in the binding of tRNA to the ribosomes. This is Small ribosomal subunit protein uS10 from Rickettsia canadensis (strain McKiel).